Here is a 292-residue protein sequence, read N- to C-terminus: Ribosomal protein L11 methyltransferase (292 aa).

S-adenosyl-L-methionine-binding residues include threonine 144, glycine 165, aspartate 187, and asparagine 229.

This sequence belongs to the methyltransferase superfamily. PrmA family.

It is found in the cytoplasm. It carries out the reaction L-lysyl-[protein] + 3 S-adenosyl-L-methionine = N(6),N(6),N(6)-trimethyl-L-lysyl-[protein] + 3 S-adenosyl-L-homocysteine + 3 H(+). In terms of biological role, methylates ribosomal protein L11. This chain is Ribosomal protein L11 methyltransferase, found in Pseudomonas putida (strain W619).